We begin with the raw amino-acid sequence, 502 residues long: Lysine--tRNA ligase (502 aa).

2 residues coordinate Mg(2+): Glu-403 and Glu-410.

It belongs to the class-II aminoacyl-tRNA synthetase family. As to quaternary structure, homodimer. The cofactor is Mg(2+).

It localises to the cytoplasm. The enzyme catalyses tRNA(Lys) + L-lysine + ATP = L-lysyl-tRNA(Lys) + AMP + diphosphate. This chain is Lysine--tRNA ligase, found in Synechococcus sp. (strain CC9605).